The primary structure comprises 254 residues: 4-hydroxy-tetrahydrodipicolinate reductase (254 aa).

7–12 (GASGRI) provides a ligand contact to NAD(+). Arg35 is a binding site for NADP(+). NAD(+) is bound by residues 91 to 93 (GTT) and 115 to 118 (AHNM). Residue His147 is the Proton donor/acceptor of the active site. His148 provides a ligand contact to (S)-2,3,4,5-tetrahydrodipicolinate. The active-site Proton donor is the Lys151. 157–158 (GT) provides a ligand contact to (S)-2,3,4,5-tetrahydrodipicolinate.

Belongs to the DapB family.

The protein resides in the cytoplasm. The catalysed reaction is (S)-2,3,4,5-tetrahydrodipicolinate + NAD(+) + H2O = (2S,4S)-4-hydroxy-2,3,4,5-tetrahydrodipicolinate + NADH + H(+). It carries out the reaction (S)-2,3,4,5-tetrahydrodipicolinate + NADP(+) + H2O = (2S,4S)-4-hydroxy-2,3,4,5-tetrahydrodipicolinate + NADPH + H(+). It participates in amino-acid biosynthesis; L-lysine biosynthesis via DAP pathway; (S)-tetrahydrodipicolinate from L-aspartate: step 4/4. Its function is as follows. Catalyzes the conversion of 4-hydroxy-tetrahydrodipicolinate (HTPA) to tetrahydrodipicolinate. In Helicobacter acinonychis (strain Sheeba), this protein is 4-hydroxy-tetrahydrodipicolinate reductase.